The following is a 441-amino-acid chain: Homoserine dehydrogenase (441 aa).

NADP(+) is bound by residues Asn-17 and Val-18. 2 residues coordinate NAD(+): Val-18 and Gly-47. Val-18 provides a ligand contact to NADPH. Arg-49, Arg-50, and Lys-107 together coordinate NADP(+). Arg-49 provides a ligand contact to NADPH. Lys-107 is a binding site for NADPH. 4 residues coordinate Na(+): Glu-131, Val-134, Gly-136, and Ile-138. Positions 189 and 192 each coordinate NADP(+). Glu-192 and Asp-203 together coordinate L-homoserine. The Proton donor role is filled by Lys-207. Gly-309 is a binding site for NADP(+). Gly-309 provides a ligand contact to NAD(+). Gly-309 contributes to the NADPH binding site. An ACT domain is found at 356 to 435 (YVSMNVADKP…VVQGVTSVLR (80 aa)).

It belongs to the homoserine dehydrogenase family. A metal cation is required as a cofactor.

It catalyses the reaction L-homoserine + NADP(+) = L-aspartate 4-semialdehyde + NADPH + H(+). It carries out the reaction L-homoserine + NAD(+) = L-aspartate 4-semialdehyde + NADH + H(+). Its pathway is amino-acid biosynthesis; L-methionine biosynthesis via de novo pathway; L-homoserine from L-aspartate: step 3/3. It functions in the pathway amino-acid biosynthesis; L-threonine biosynthesis; L-threonine from L-aspartate: step 3/5. In terms of biological role, catalyzes the conversion of L-aspartate-beta-semialdehyde (L-Asa) to L-homoserine (L-Hse), the third step in the biosynthesis of threonine and methionine from aspartate. The chain is Homoserine dehydrogenase (hom) from Mycobacterium leprae (strain TN).